A 1045-amino-acid chain; its full sequence is Elongation factor 3 (1045 aa).

7 HEAT repeats span residues 5–42 (DQSL…GNII), 43–85 (EHDI…PSVE), 86–123 (PFVI…AINP), 125–162 (AIKA…AAKE), 166–203 (LRMP…TVDN), 205–241 (DIER…EVTP), and 242–279 (ATLS…LVED). 3 residues coordinate ADP: Ile42, His44, and Ser83. 3 residues coordinate ADP: Thr392, His396, and Glu397. ABC transporter domains follow at residues 426 to 641 (DEGE…YYEL) and 667 to 993 (VKVS…KKED). Positions 703, 922, 925, and 951 each coordinate ADP. Residues 974–1045 (SGHNWVSGQG…AYVSSDDEDF (72 aa)) form a disordered region. Over residues 1007–1031 (GGKKKKKLSSAELRKKKKERMKKKK) the composition is skewed to basic residues.

The protein belongs to the ABC transporter superfamily. ABCF family. EF3 subfamily. In terms of assembly, monomer.

It is found in the cytoplasm. The protein localises to the cytosol. The catalysed reaction is ATP + H2O = ADP + phosphate + H(+). The protein operates within protein biosynthesis; polypeptide chain elongation. Its function is as follows. Ribosome-dependent ATPase that functions in cytoplasmic translation elongation. Required for the ATP-dependent release of deacylated tRNA from the ribosomal E-site during protein biosynthesis. Stimulates the eEF1A-dependent binding of aminoacyl-tRNA to the ribosomal A-site, which has reduced affinity for tRNA as long as the E-site is occupied. Assists translation termination by stimulating the release of nascent protein from the ribosome by release factors. This chain is Elongation factor 3 (TEF3), found in Candida glabrata (strain ATCC 2001 / BCRC 20586 / JCM 3761 / NBRC 0622 / NRRL Y-65 / CBS 138) (Yeast).